The primary structure comprises 168 residues: WAP four-disulfide core domain protein 2 (168 aa).

Positions 1 to 30 (MPACRLCLLATGLLLGLLLFTPLSATGTRA) are cleaved as a signal peptide. WAP domains lie at 31–74 (EKPG…SKPN) and 119–167 (NGEK…TTPK). Intrachain disulfides connect cysteine 36/cysteine 62, cysteine 45/cysteine 66, cysteine 49/cysteine 61, and cysteine 55/cysteine 70. The disordered stretch occupies residues 100–123 (PLSRGQVSTKPPVVTKEGGNGEKQ). 4 disulfide bridges follow: cysteine 126–cysteine 154, cysteine 137–cysteine 158, cysteine 141–cysteine 153, and cysteine 147–cysteine 163.

Homotrimer; disulfide-linked.

Its subcellular location is the secreted. Broad range protease inhibitor. The protein is WAP four-disulfide core domain protein 2 (Wfdc2) of Rattus norvegicus (Rat).